The sequence spans 371 residues: Spermidine/putrescine import ATP-binding protein PotA (371 aa).

The ABC transporter domain maps to 10 to 240; that stretch reads VELRNVTKSY…PKNLFVARFI (231 aa). Residue 42–49 participates in ATP binding; sequence GPSGCGKT.

It belongs to the ABC transporter superfamily. Spermidine/putrescine importer (TC 3.A.1.11.1) family. The complex is composed of two ATP-binding proteins (PotA), two transmembrane proteins (PotB and PotC) and a solute-binding protein (PotD).

It is found in the cell inner membrane. It carries out the reaction ATP + H2O + polyamine-[polyamine-binding protein]Side 1 = ADP + phosphate + polyamineSide 2 + [polyamine-binding protein]Side 1.. In terms of biological role, part of the ABC transporter complex PotABCD involved in spermidine/putrescine import. Responsible for energy coupling to the transport system. This Haemophilus ducreyi (strain 35000HP / ATCC 700724) protein is Spermidine/putrescine import ATP-binding protein PotA.